The primary structure comprises 400 residues: NADH dehydrogenase-like protein MT1860 (400 aa).

This sequence belongs to the NADH dehydrogenase family. It depends on FAD as a cofactor.

The polypeptide is NADH dehydrogenase-like protein MT1860 (Mycobacterium tuberculosis (strain CDC 1551 / Oshkosh)).